The primary structure comprises 185 residues: Elongation factor P (185 aa).

Belongs to the elongation factor P family.

It localises to the cytoplasm. The protein operates within protein biosynthesis; polypeptide chain elongation. In terms of biological role, involved in peptide bond synthesis. Stimulates efficient translation and peptide-bond synthesis on native or reconstituted 70S ribosomes in vitro. Probably functions indirectly by altering the affinity of the ribosome for aminoacyl-tRNA, thus increasing their reactivity as acceptors for peptidyl transferase. This chain is Elongation factor P, found in Brevibacillus brevis (strain 47 / JCM 6285 / NBRC 100599).